A 234-amino-acid chain; its full sequence is Iron-sulfur cluster co-chaperone protein HscB (234 aa).

Cys40, Cys43, Cys57, and Cys60 together coordinate a divalent metal cation. In terms of domain architecture, J spans 71–143; the sequence is DYFSLMNCNR…LTRGLYLLKL (73 aa).

The protein belongs to the HscB family. Interacts with ISCU and HSPA9 to form an iron-sulfur transfer complex. Interacts with SDHAF1 (via the first LYR motif); the interaction recruits the iron-sulfur transfer complex composed of HSC20, HSPA9 and ISCU and mediates the incorporation of iron-sulfur clusters into SDHB which also interacts with HSC20. Interacts with the cytoplasmic form of ISCU and with CIA complex member CIAO1 (via LYR motif). In terms of assembly, homodimer. Interacts with ISCU (cytoplasmic form); this interaction stabilizes the (Fe-S) clusters on ISCU. Interacts with the CIA complex member CIAO1 (via LYR motif).

The protein localises to the cytoplasm. It localises to the mitochondrion. It functions in the pathway cofactor biosynthesis; iron-sulfur cluster biosynthesis. Acts as a co-chaperone in iron-sulfur cluster assembly in mitochondria. Required for incorporation of iron-sulfur clusters into SDHB, the iron-sulfur protein subunit of succinate dehydrogenase that is involved in complex II of the mitochondrial electron transport chain. Recruited to SDHB by interaction with SDHAF1 which first binds SDHB and then recruits the iron-sulfur transfer complex formed by HSC20, HSPA9 and ISCU through direct binding to HSC20. Plays an essential role in hematopoiesis. Its function is as follows. Acts as a co-chaperone in iron-sulfur cluster assembly in the cytoplasm. Also mediates complex formation between components of the cytosolic iron-sulfur biogenesis pathway and the CIA targeting complex composed of CIAO1, DIPK1B/FAM69B and MMS19 by binding directly to the scaffold protein ISCU and to CIAO1. This facilitates iron-sulfur cluster insertion into a number of cytoplasmic and nuclear proteins including POLD1, ELP3, DPYD and PPAT. This is Iron-sulfur cluster co-chaperone protein HscB from Mus musculus (Mouse).